The following is a 119-amino-acid chain: Protein Wnt-4 (119 aa).

Residue Ser-1 is the site of O-palmitoleoyl serine; by PORCN attachment. 2 cysteine pairs are disulfide-bonded: Cys-69/Cys-100 and Cys-85/Cys-95. An N-linked (GlcNAc...) asparagine glycan is attached at Asn-86.

Belongs to the Wnt family. Post-translationally, palmitoleoylation is required for efficient binding to frizzled receptors. Depalmitoleoylation leads to Wnt signaling pathway inhibition.

The protein localises to the secreted. Its subcellular location is the extracellular space. It localises to the extracellular matrix. In terms of biological role, ligand for members of the frizzled family of seven transmembrane receptors. Plays an important role in embryonic development. In Plestiodon skiltonianus (Western skink), this protein is Protein Wnt-4 (WNT-4).